The following is an 820-amino-acid chain: Leucine-rich repeat and guanylate kinase domain-containing protein (820 aa).

Residues 72-83 (EAEAEQEEKQQE) are compositionally biased toward basic and acidic residues. Residues 72 to 96 (EAEAEQEEKQQEDGESEESEESEMQ) form a disordered region. Acidic residues predominate over residues 84-94 (DGESEESEESE). LRR repeat units lie at residues 129–149 (YLNL…CGYV), 150–171 (HLQK…SCMP), 172–193 (YLLE…KPPQ), 194–215 (NLKK…SAYH), 216–237 (TLTQ…ENCI), 238–259 (SLTH…GTLP), 260–280 (IKVL…EELK), 281–302 (ALQN…ENHD), and 303–324 (LLEV…EYIE). Positions 337 to 375 (NPIQTKPEYWFFVIYMLLRLTELDQQKIKVEEKVFAVNK) constitute an LRRCT domain. The region spanning 414–597 (YPMLILTGPA…AYQKLSELIR (184 aa)) is the Guanylate kinase-like domain. 421 to 428 (GPAACGKR) contacts ATP. The disordered stretch occupies residues 800 to 820 (TIMDPGSNTKPTLPPIPHGRR). A compositionally biased stretch (pro residues) spans 811–820 (TLPPIPHGRR).

In terms of assembly, interacts (via guanylate kinase-like domain) with RIMBP3 (via coiled-coil region). Interacts (via guanylate kinase-like domain) with HOOK2. Interacts (via LRRCT domain) with KLC3. Interacts with HOOK1 and HOOK3. As to expression, highly expressed in the testis. During spermatid development is initially localized to a supra-nuclear region of round spermatids, and is particularly evident at the leading edge of the developing acrosome and acroplaxome. As maturation proceeded and nuclear elongation initiated, LRGUK moves distally to ultimately reside on the microtubules of the manchette. LRGUK is also evident in the sperm basal body and the sperm tail.

It is found in the cytoplasmic vesicle. It localises to the secretory vesicle. Its subcellular location is the acrosome. The protein localises to the cytoplasm. The protein resides in the cytoskeleton. It is found in the cilium basal body. Its function is as follows. Involved in multiple aspects of sperm assembly including acrosome attachment, shaping of the sperm head and in the early aspects of axoneme development. Not essential for primary cilium biogenesis. The sequence is that of Leucine-rich repeat and guanylate kinase domain-containing protein (Lrguk) from Mus musculus (Mouse).